A 729-amino-acid polypeptide reads, in one-letter code: Cellulose synthase-like protein E1 (729 aa).

2 consecutive transmembrane segments (helical) span residues 29–49 and 64–84; these read VIAYRFFSASVFVCICLIWFY and LIWFVMFIVEIWFGLYWVVTQ. Catalysis depends on residues D152 and D443. 5 helical membrane-spanning segments follow: residues 526–546, 553–573, 644–664, 680–700, and 709–729; these read LPVLIYSVLTSLCLFKGIPLF, WFIPFGYVTVAATAYSLAEFL, MFLVLGTLGMLNLFCFAAAVA, QFVITGVLVVINWPLYKGMLL, and MSVTVKSVVLALSACTCLAFL.

It belongs to the glycosyltransferase 2 family. Plant cellulose synthase-like E subfamily.

Its subcellular location is the golgi apparatus membrane. Functionally, thought to be a Golgi-localized beta-glycan synthase that polymerize the backbones of noncellulosic polysaccharides (hemicelluloses) of plant cell wall. The protein is Cellulose synthase-like protein E1 (CSLE1) of Arabidopsis thaliana (Mouse-ear cress).